The sequence spans 155 residues: Ribonuclease H (155 aa).

An RNase H type-1 domain is found at 9 to 150 (DGQQVEMWTD…ADALANQGVE (142 aa)). Residues Asp18, Glu56, Asp78, and Asp142 each contribute to the Mg(2+) site.

The protein belongs to the RNase H family. In terms of assembly, monomer. Mg(2+) serves as cofactor.

Its subcellular location is the cytoplasm. It catalyses the reaction Endonucleolytic cleavage to 5'-phosphomonoester.. Its function is as follows. Endonuclease that specifically degrades the RNA of RNA-DNA hybrids. In Bordetella bronchiseptica (strain ATCC BAA-588 / NCTC 13252 / RB50) (Alcaligenes bronchisepticus), this protein is Ribonuclease H.